We begin with the raw amino-acid sequence, 345 residues long: Fructose-1,6-bisphosphatase class 1 (345 aa).

Mg(2+) contacts are provided by E90, D109, L111, and D112. Substrate is bound by residues 112-115 and N200; that span reads DGSS. A Mg(2+)-binding site is contributed by E272.

The protein belongs to the FBPase class 1 family. As to quaternary structure, homotetramer. It depends on Mg(2+) as a cofactor.

Its subcellular location is the cytoplasm. It catalyses the reaction beta-D-fructose 1,6-bisphosphate + H2O = beta-D-fructose 6-phosphate + phosphate. The protein operates within carbohydrate biosynthesis; gluconeogenesis. The chain is Fructose-1,6-bisphosphatase class 1 from Bradyrhizobium diazoefficiens (strain JCM 10833 / BCRC 13528 / IAM 13628 / NBRC 14792 / USDA 110).